A 450-amino-acid polypeptide reads, in one-letter code: MVKYFGTDGVRGIANKELTPELAFKLGRYGGYVLAHNEGADRPKVLVGRDTRVSGEMLESALISGLASIGAEVMRLGVISTPGVAYLTREMGAELGVMISASHNPVADNGIKFFGADGFKLSDAQEEEIETLLDQDNPDLPRPVGTDIVHFSDYFEGAQKYLSYLKSTIDVNLEGLKITLDGANGSTSALAPFLFGDLEADTETIGCSPDGYNINDNCGSTHPELLAEKVLETESDFGLAFDGDGDRLIAVDEKGNIIDGDQIMFVIGQEMHKNQELNNDMIVSTVMSNLGFYKALENEGIKSNKTKVGDRYVVEEMRKGNYNLGGEQSGHIVMMDYNTTGDGLLTGVQLAAVIKMSGKPLSELAAQMKKYPQSLINVKVTDKHHVEDNEDVKKVMDEVETEMNGEGRILVRPSGTEPLVRVMVEASTDEDAQRFAQRIADEVQSKMGLE.

The active-site Phosphoserine intermediate is Ser-102. Positions 102, 242, 244, and 246 each coordinate Mg(2+). Phosphoserine is present on Ser-102.

The protein belongs to the phosphohexose mutase family. It depends on Mg(2+) as a cofactor. Activated by phosphorylation.

The catalysed reaction is alpha-D-glucosamine 1-phosphate = D-glucosamine 6-phosphate. Functionally, catalyzes the conversion of glucosamine-6-phosphate to glucosamine-1-phosphate. This chain is Phosphoglucosamine mutase, found in Staphylococcus haemolyticus (strain JCSC1435).